A 698-amino-acid polypeptide reads, in one-letter code: Trafficking protein particle complex III-specific subunit 85 (698 aa).

2 disordered regions span residues 82 to 125 (VGQH…LFQR) and 678 to 698 (VDSAPRPSEKNLTRTSVSFIG). The span at 678–689 (VDSAPRPSEKNL) shows a compositional bias: basic and acidic residues.

This sequence belongs to the TRS85 family. In terms of assembly, part of the multisubunit TRAPP (transport protein particle) III complex composed of BET3, BET5, TRS20, TRS23, TRS31, TRS33 and TRS85.

Its subcellular location is the preautophagosomal structure. Functionally, specific subunit of the TRAPP III complex that acts as an autophagy-specific guanine nucleotide exchange factor (GEF) for YPT1. TRS85 directs the TRAPP III complex to the phagophore assembly site (PAS) that is involved in autophagosome formation. Required for membrane expansion during autophagy and the CVT pathway. Required for sporulation. Has a role late in meiosis following DNA replication. In Saccharomyces cerevisiae (strain ATCC 204508 / S288c) (Baker's yeast), this protein is Trafficking protein particle complex III-specific subunit 85 (TRS85).